The primary structure comprises 389 residues: S-adenosylmethionine synthase (389 aa).

Histidine 19 contacts ATP. A Mg(2+)-binding site is contributed by aspartate 21. Glutamate 47 is a binding site for K(+). L-methionine is bound by residues glutamate 60 and glutamine 103. The interval 103-113 (QSGDIAQGVDR) is flexible loop. Residues 168–170 (DGK), 234–235 (RF), aspartate 243, 249–250 (RK), alanine 266, and lysine 270 each bind ATP. An L-methionine-binding site is contributed by aspartate 243. Lysine 274 is an L-methionine binding site.

It belongs to the AdoMet synthase family. As to quaternary structure, homotetramer; dimer of dimers. Mg(2+) serves as cofactor. The cofactor is K(+).

It localises to the cytoplasm. The enzyme catalyses L-methionine + ATP + H2O = S-adenosyl-L-methionine + phosphate + diphosphate. Its pathway is amino-acid biosynthesis; S-adenosyl-L-methionine biosynthesis; S-adenosyl-L-methionine from L-methionine: step 1/1. Its function is as follows. Catalyzes the formation of S-adenosylmethionine (AdoMet) from methionine and ATP. The overall synthetic reaction is composed of two sequential steps, AdoMet formation and the subsequent tripolyphosphate hydrolysis which occurs prior to release of AdoMet from the enzyme. The sequence is that of S-adenosylmethionine synthase from Nitratidesulfovibrio vulgaris (strain DSM 19637 / Miyazaki F) (Desulfovibrio vulgaris).